Reading from the N-terminus, the 204-residue chain is MAEQEPTAEQLAQIAAENEEDEHSVNYKPPAQKSIQEIQELDKDDESLRKYKEALLGRVAVSADPNVPNVIVTRLTLVCSTAPGPLELDLTGDLESFKKQSFVLKEGVEYRIKISFRVNREIVSGMKYIQHTYRKGVKIDKTDYMVGSYGPRAEEYEFLTPMEEAPKGMLARGSYNIKSRFTDDDKTDHLSWEWNLTIKKEWKD.

Residues M1 to Q36 form a disordered region. Position 2 is an N-acetylalanine (A2). S34 bears the Phosphoserine mark. K43 bears the N6-acetyllysine mark. The residue at position 47 (S47) is a Phosphoserine. 2 positions are modified to N6-acetyllysine: K105 and K127. Residues K138 and K141 each participate in a glycyl lysine isopeptide (Lys-Gly) (interchain with G-Cter in SUMO1); alternate cross-link. Residues K138 and K141 each participate in a glycyl lysine isopeptide (Lys-Gly) (interchain with G-Cter in SUMO2); alternate cross-link. N6-acetyllysine; alternate is present on K141. N6-succinyllysine; alternate is present on K141. K178 carries the N6-acetyllysine modification.

The protein belongs to the Rho GDI family. Monomer. Interacts with FER. Interacts with PLXNB3. Forms a heterodimer with RAC1. Interacts with RHOA, the affinity is increased by three orders of magnitude when RHOA is prenylated. Interacts with PSMD10; the interaction increases ARHGDIA association with RHOA, leading to ARHGDIA-mediated inactivation of RHOA and ROCK and prolonged AKT activation. Interacts with KANK2; the interaction is direct and may regulate the interaction of ARHGDIA with RHOA, RAC1 and CDC42. Interacts with RHOC. Interacts with CDC42. Interacts with NGFR (via death domain); NGFR binding decreases the affinity for RHOA. In kidney glomerulus, expressed in podocytes and mesangial cells.

It is found in the cytoplasm. In terms of biological role, controls Rho proteins homeostasis. Regulates the GDP/GTP exchange reaction of the Rho proteins by inhibiting the dissociation of GDP from them, and the subsequent binding of GTP to them. Retains Rho proteins such as CDC42, RAC1 and RHOA in an inactive cytosolic pool, regulating their stability and protecting them from degradation. Actively involved in the recycling and distribution of activated Rho GTPases in the cell, mediates extraction from membranes of both inactive and activated molecules due its exceptionally high affinity for prenylated forms. Through the modulation of Rho proteins, may play a role in cell motility regulation. In glioma cells, inhibits cell migration and invasion by mediating the signals of SEMA5A and PLXNB3 that lead to inactivation of RAC1. This chain is Rho GDP-dissociation inhibitor 1 (Arhgdia), found in Mus musculus (Mouse).